Reading from the N-terminus, the 498-residue chain is uncharacterized protein (498 aa).

Disordered stretches follow at residues 1–48, 99–134, and 190–209; these read MSND…ARPK, NDLH…GNSK, and NSEN…TSSN. Residues 35–44 show a composition bias toward polar residues; that stretch reads ELSTPKQVNQ. A compositionally biased stretch (basic and acidic residues) spans 99 to 110; the sequence is NDLHPLDNDSTR. Residues 111 to 126 show a composition bias toward polar residues; that stretch reads TSKTLKNSSEVLTASK.

This is an uncharacterized protein from Schizosaccharomyces pombe (strain 972 / ATCC 24843) (Fission yeast).